Consider the following 234-residue polypeptide: tRNA (guanine-N(1)-)-methyltransferase (234 aa).

Residues Gly110 and 134-139 (IGDYVL) contribute to the S-adenosyl-L-methionine site.

Belongs to the RNA methyltransferase TrmD family. As to quaternary structure, homodimer.

The protein resides in the cytoplasm. The enzyme catalyses guanosine(37) in tRNA + S-adenosyl-L-methionine = N(1)-methylguanosine(37) in tRNA + S-adenosyl-L-homocysteine + H(+). Functionally, specifically methylates guanosine-37 in various tRNAs. This is tRNA (guanine-N(1)-)-methyltransferase from Tropheryma whipplei (strain TW08/27) (Whipple's bacillus).